The chain runs to 434 residues: O-phosphoseryl-tRNA(Sec) selenium transferase (434 aa).

The segment at 1 to 40 (MGLNITGLIPKHMENRGKLTLKENLKIIENILEQRKAPEN) is tetramerization. Position 71 (R71) interacts with pyridoxal 5'-phosphate. The interval 92-102 (GRSGNLIDPQP) is phosphate loop (P-loop). Residues R93, S94, and Q101 each coordinate substrate. K277 is subject to N6-(pyridoxal phosphate)lysine. Residue R306 participates in substrate binding.

Belongs to the SepSecS family. In terms of assembly, homotetramer. The cofactor is pyridoxal 5'-phosphate.

It carries out the reaction O-phospho-L-seryl-tRNA(Sec) + selenophosphate + H2O = L-selenocysteinyl-tRNA(Sec) + 2 phosphate. The protein operates within aminoacyl-tRNA biosynthesis; selenocysteinyl-tRNA(Sec) biosynthesis; selenocysteinyl-tRNA(Sec) from L-seryl-tRNA(Sec) (archaeal/eukaryal route): step 2/2. Its function is as follows. Converts O-phosphoseryl-tRNA(Sec) to selenocysteinyl-tRNA(Sec) required for selenoprotein biosynthesis. This is O-phosphoseryl-tRNA(Sec) selenium transferase (spcS) from Methanocaldococcus jannaschii (strain ATCC 43067 / DSM 2661 / JAL-1 / JCM 10045 / NBRC 100440) (Methanococcus jannaschii).